We begin with the raw amino-acid sequence, 374 residues long: Guanine nucleotide-binding protein subunit alpha-15 (374 aa).

In terms of domain architecture, G-alpha spans 41–374 (GELKLLLLGP…ARYLDEINLL (334 aa)). The tract at residues 44–57 (KLLLLGPGESGKST) is G1 motif. Residues 49-56 (GPGESGKS), 183-189 (LRSRMPT), 208-212 (DAGGQ), 277-280 (NKTD), and A346 contribute to the GTP site. Positions 56 and 189 each coordinate Mg(2+). The interval 181–189 (DVLRSRMPT) is G2 motif. The G3 motif stretch occupies residues 204–213 (LRIVDAGGQK). The tract at residues 273–280 (ILFLNKTD) is G4 motif. Positions 344–349 (TCATDT) are G5 motif.

This sequence belongs to the G-alpha family. G(q) subfamily. G proteins are composed of 3 units; alpha, beta and gamma. The alpha chain contains the guanine nucleotide binding site.

Its function is as follows. Guanine nucleotide-binding proteins (G proteins) are involved as modulators or transducers in various transmembrane signaling systems. The chain is Guanine nucleotide-binding protein subunit alpha-15 (Gna15) from Rattus norvegicus (Rat).